Consider the following 480-residue polypeptide: Glycogen synthase (480 aa).

An ADP-alpha-D-glucose-binding site is contributed by lysine 15.

The protein belongs to the glycosyltransferase 1 family. Bacterial/plant glycogen synthase subfamily.

It carries out the reaction [(1-&gt;4)-alpha-D-glucosyl](n) + ADP-alpha-D-glucose = [(1-&gt;4)-alpha-D-glucosyl](n+1) + ADP + H(+). The protein operates within glycan biosynthesis; glycogen biosynthesis. Synthesizes alpha-1,4-glucan chains using ADP-glucose. In Pasteurella multocida (strain Pm70), this protein is Glycogen synthase.